A 166-amino-acid polypeptide reads, in one-letter code: Glutamyl-tRNA(Gln) amidotransferase subunit C-2, mitochondrial (166 aa).

It belongs to the GatC family. Subunit of the heterotrimeric GatCAB amidotransferase (AdT) complex, composed of A, B and C subunits.

The protein resides in the mitochondrion. The enzyme catalyses L-glutamyl-tRNA(Gln) + L-glutamine + ATP + H2O = L-glutaminyl-tRNA(Gln) + L-glutamate + ADP + phosphate + H(+). Functionally, allows the formation of correctly charged Gln-tRNA(Gln) through the transamidation of misacylated Glu-tRNA(Gln) in the mitochondria. The reaction takes place in the presence of glutamine and ATP through an activated gamma-phospho-Glu-tRNA(Gln). The chain is Glutamyl-tRNA(Gln) amidotransferase subunit C-2, mitochondrial from Culex quinquefasciatus (Southern house mosquito).